The following is a 255-amino-acid chain: tRNA (guanine-N(1)-)-methyltransferase (255 aa).

S-adenosyl-L-methionine-binding positions include Gly121 and 141-146 (IGDYVL). Residues 236–255 (PVKAPNRAGRQKTPKNKTDG) are disordered. Positions 244 to 255 (GRQKTPKNKTDG) are enriched in basic residues.

This sequence belongs to the RNA methyltransferase TrmD family. As to quaternary structure, homodimer.

Its subcellular location is the cytoplasm. It carries out the reaction guanosine(37) in tRNA + S-adenosyl-L-methionine = N(1)-methylguanosine(37) in tRNA + S-adenosyl-L-homocysteine + H(+). In terms of biological role, specifically methylates guanosine-37 in various tRNAs. This chain is tRNA (guanine-N(1)-)-methyltransferase, found in Bradyrhizobium diazoefficiens (strain JCM 10833 / BCRC 13528 / IAM 13628 / NBRC 14792 / USDA 110).